Here is a 547-residue protein sequence, read N- to C-terminus: Sterol carrier protein 2 (547 aa).

Phosphoserine is present on residues serine 3 and serine 8. Position 40 is an N6-succinyllysine (lysine 40). Residue lysine 132 is modified to N6-acetyllysine; alternate. An N6-succinyllysine; alternate modification is found at lysine 132. N6-succinyllysine is present on lysine 168. An N6-acetyllysine modification is found at lysine 177. Lysine 183 is modified (N6-acetyllysine; alternate). Lysine 183 carries the post-translational modification N6-succinyllysine; alternate. N6-succinyllysine is present on residues lysine 211 and lysine 282. 5 positions are modified to N6-acetyllysine; alternate: lysine 341, lysine 432, lysine 438, lysine 443, and lysine 453. 5 positions are modified to N6-succinyllysine; alternate: lysine 341, lysine 432, lysine 438, lysine 443, and lysine 453. The 111-residue stretch at 433-543 folds into the SCP2 domain; it reads ANLIFKEIEK…KLQSLQLQPD (111 aa). Position 464 is an N6-succinyllysine (lysine 464). Lysine 470 carries the N6-acetyllysine; alternate modification. Lysine 470 carries the N6-succinyllysine; alternate modification. N6-succinyllysine is present on lysine 479. Residue lysine 491 is modified to N6-acetyllysine. N6-succinyllysine is present on residues lysine 492 and lysine 511. Serine 516 bears the Phosphoserine mark. Lysine 522 and lysine 534 each carry N6-succinyllysine. The residue at position 537 (serine 537) is a Phosphoserine. Lysine 544 bears the N6-succinyllysine mark. The short motif at 545-547 is the Microbody targeting signal element; sequence AKL.

The protein in the N-terminal section; belongs to the thiolase-like superfamily. Thiolase family. In terms of assembly, interacts with PEX5; the interaction is essential for peroxisomal import. PreSCP2, a protein with a molecular mass of about 15 kDa, is processed into its mature form (SCP2) by proteolytic cleavage of a 20 residue leader sequence after translocation into peroxisomes. In terms of tissue distribution, liver &gt; intestine &gt; brain &gt; lung, colon, stomach, spleen, kidney, heart and ovary. As to expression, expressed in liver (at protein level).

It localises to the peroxisome. Its subcellular location is the cytoplasm. The protein localises to the mitochondrion. The catalysed reaction is an acyl-CoA + acetyl-CoA = a 3-oxoacyl-CoA + CoA. It carries out the reaction choloyl-CoA + propanoyl-CoA = 3alpha,7alpha,12alpha-trihydroxy-24-oxo-5beta-cholestan-26-oyl-CoA + CoA. It catalyses the reaction 4,8,12-trimethyltridecanoyl-CoA + propanoyl-CoA = 3-oxopristanoyl-CoA + CoA. The enzyme catalyses hexanoyl-CoA + acetyl-CoA = 3-oxooctanoyl-CoA + CoA. The catalysed reaction is tetradecanoyl-CoA + acetyl-CoA = 3-oxohexadecanoyl-CoA + CoA. It carries out the reaction 3-oxohexadecanedioyl-CoA + CoA = tetradecanedioyl-CoA + acetyl-CoA. It catalyses the reaction propanoyl-CoA + tetradecanoyl-CoA = 3-oxo-2-methylhexadecanoyl-CoA + CoA. The enzyme catalyses butanoyl-CoA + acetyl-CoA = 3-oxohexanoyl-CoA + CoA. The catalysed reaction is octanoyl-CoA + acetyl-CoA = 3-oxodecanoyl-CoA + CoA. It carries out the reaction decanoyl-CoA + acetyl-CoA = 3-oxododecanoyl-CoA + CoA. It catalyses the reaction dodecanoyl-CoA + acetyl-CoA = 3-oxotetradecanoyl-CoA + CoA. The enzyme catalyses hexadecanoyl-CoA + acetyl-CoA = 3-oxooctadecanoyl-CoA + CoA. The catalysed reaction is 3-oxo-(9Z-octadecenoyl)-CoA + CoA = (7Z)-hexadecenoyl-CoA + acetyl-CoA. It carries out the reaction 7-dehydrocholesterol(in) = 7-dehydrocholesterol(out). In terms of biological role, plays a crucial role in the peroxisomal oxidation of branched-chain fatty acids. Catalyzes the last step of the peroxisomal beta-oxidation of branched chain fatty acids and the side chain of the bile acid intermediates di- and trihydroxycoprostanic acids (DHCA and THCA). Also active with medium and long straight chain 3-oxoacyl-CoAs. Stimulates the microsomal conversion of 7-dehydrocholesterol to cholesterol and transfers phosphatidylcholine and 7-dehydrocholesterol between membrances, in vitro. Isoforms SCP2 and SCPx cooperate in peroxisomal oxidation of certain naturally occurring tetramethyl-branched fatty acyl-CoAs. Its function is as follows. Mediates the transfer of all common phospholipids, cholesterol and gangliosides from the endoplasmic reticulum to the plasma membrane. May play a role in regulating steroidogenesis. Stimulates the microsomal conversion of 7-dehydrocholesterol to cholesterol. Also binds fatty acids and fatty acyl Coenzyme A (CoA) such as phytanoyl-CoA. Involved in the regulation phospholipid synthesis in endoplasmic reticulum enhancing the incorporation of exogenous fatty acid into glycerides. Seems to stimulate the rate-limiting step in phosphatidic acid formation mediated by GPAT3. Isoforms SCP2 and SCPx cooperate in peroxisomal oxidation of certain naturally occurring tetramethyl-branched fatty acyl-CoAs. This Rattus norvegicus (Rat) protein is Sterol carrier protein 2.